A 124-amino-acid polypeptide reads, in one-letter code: Small ribosomal subunit protein uS12c (124 aa).

Disordered regions lie at residues 1 to 28 and 104 to 124; these read MPTI…KSCP and AAGV…KPKS. 2 stretches are compositionally biased toward basic residues: residues 11 to 20 and 109 to 124; these read ERRKINKKTK and DRRK…KPKS.

The protein belongs to the universal ribosomal protein uS12 family. In terms of assembly, part of the 30S ribosomal subunit.

It is found in the plastid. Its subcellular location is the chloroplast. Functionally, with S4 and S5 plays an important role in translational accuracy. Located at the interface of the 30S and 50S subunits. The sequence is that of Small ribosomal subunit protein uS12c (rps12) from Porphyra purpurea (Red seaweed).